The primary structure comprises 802 residues: MANTKKTTLDITGMTCAACSNRIEKKLNKLDDVNAQVNLTTEKATVEYNPDQHDVQEFINTIQHLGYGVAVETVELDITGMTCAACSSRIEKVLNKMDGVQNATVNLTTEQAKVDYYPEETDADKLVTRIQKLGYDASIKDNNKDQTSRKAEALQHKLIKLIISAVLSLPLLMLMFVHLFNMHIPALFTNPWFQFILATPVQFIIGWQFYVGAYKNLRNGGANMDVLVAVGTSAAYFYSIYEMVRWLNGSTTQPHLYFETSAVLITLILFGKYLEARAKSQTTNALGELLSLQAKEARILKDGNEVMIPLNEVHVGDTLIVKPGEKIPVDGKIIKGMTAIDESMLTGESIPVEKNVDDTVIGSTMNKNGTITMTATKVGGDTALANIIKVVEEAQSSKAPIQRLADIISGYFVPIVVGIALLTFIVWITLVTPGTFEPALVASISVLVIACPCALGLATPTSIMVGTGRAAENGILFKGGEFVERTHQIDTIVLDKTGTITNGRPVVTDYHGDNQTLQLLATAEKDSEHPLAEAIVNYAKEKQLILTETTTFKAVPGHGIEATIDHHYILVGNRKLMADNDISLPKHISDDLTHYERDGKTAMLIAVNYSLTGIIAVADTVKDHAKDAIKQLHDMGIEVAMLTGDNKNTAQAIAKQVGIDTVIADILPEEKAAQIAKLQQQGKKVAMVGDGVNDAPALVKADIGIAIGTGTEVAIEAADITILGGDLMLIPKAIYASKATIRNIRQNLFWAFGYNIAGIPIAALGLLAPWVAGAAMALSSVSVVTNALRLKKMRLEPRRKDA.

HMA domains lie at 5 to 70 (KKTT…YGVA) and 72 to 138 (ETVE…YDAS). Cys-16, Cys-19, Cys-83, and Cys-86 together coordinate Cu(+). The next 6 membrane-spanning stretches (helical) occupy residues 161 to 181 (LIIS…HLFN), 192 to 212 (WFQF…FYVG), 224 to 244 (MDVL…YEMV), 256 to 276 (LYFE…YLEA), 411 to 431 (YFVP…ITLV), and 438 to 458 (PALV…LGLA). Residue Asp-495 is the 4-aspartylphosphate intermediate of the active site. Mg(2+) contacts are provided by Asp-690 and Asp-694. 2 consecutive transmembrane segments (helical) span residues 748–767 (LFWA…LGLL) and 771–790 (VAGA…ALRL).

This sequence belongs to the cation transport ATPase (P-type) (TC 3.A.3) family. Type IB subfamily.

Its subcellular location is the cell membrane. It catalyses the reaction Cu(+)(in) + ATP + H2O = Cu(+)(out) + ADP + phosphate + H(+). In terms of biological role, involved in copper export. In Staphylococcus aureus (strain USA300 / TCH1516), this protein is Copper-exporting P-type ATPase (copA).